A 352-amino-acid chain; its full sequence is ADP-ribosylation factor GTPase-activating protein GCS1 (352 aa).

Residues 11-127 (RRRLLQLQKI…LTCLCEDRVF (117 aa)) form the Arf-GAP domain. The C4-type zinc-finger motif lies at 26-49 (CMDCGAPNPQWATPKFGAFICLEC). Residues 138 to 151 (SKLSATSQTAASAT) are compositionally biased toward low complexity. Disordered regions lie at residues 138 to 181 (SKLS…ANFQ) and 196 to 231 (NQSR…GSSN). The residue at position 151 (Thr151) is a Phosphothreonine. Ser157 bears the Phosphoserine mark. Thr161 is subject to Phosphothreonine. Ser168 carries the phosphoserine modification. Residues 168–179 (SATPANSSNGAN) show a composition bias toward polar residues. Thr170 is subject to Phosphothreonine. Ser260 is subject to Phosphoserine. Positions 315–330 (NGNAEDSSTAGNTTHT) are enriched in polar residues. Residues 315–352 (NGNAEDSSTAGNTTHTEYQKIDNNDKKNEQDEDKWDDF) are disordered. Residues 331–343 (EYQKIDNNDKKNE) show a composition bias toward basic and acidic residues.

The protein localises to the cytoplasm. Its subcellular location is the mitochondrion. It localises to the perinuclear region. The protein resides in the golgi apparatus. GTPase-activating protein (GAP) for ARF1 and ARF2. Involved in intracellular vesicular transport. Required for transport from the trans-Golgi network. Implicated in the regulation of retrograde transport from the Golgi to the ER and in actin cytoskeletal organization. May be involved in the maintenance of mitochondrial morphology, possibly through organizing the actin cytoskeleton in Saccharomyces. This Saccharomyces cerevisiae (strain ATCC 204508 / S288c) (Baker's yeast) protein is ADP-ribosylation factor GTPase-activating protein GCS1 (GCS1).